The following is a 398-amino-acid chain: Succinate--CoA ligase [ADP-forming] subunit beta (398 aa).

In terms of domain architecture, ATP-grasp spans Lys-9–Glu-254. ATP contacts are provided by residues Lys-46, Gly-53–Gly-55, Glu-109, Ser-112, and Glu-117. Residues Asn-209 and Asp-223 each contribute to the Mg(2+) site. Residues Asn-274 and Gly-331–Met-333 each bind substrate.

The protein belongs to the succinate/malate CoA ligase beta subunit family. Heterotetramer of two alpha and two beta subunits. The cofactor is Mg(2+).

It catalyses the reaction succinate + ATP + CoA = succinyl-CoA + ADP + phosphate. It carries out the reaction GTP + succinate + CoA = succinyl-CoA + GDP + phosphate. Its pathway is carbohydrate metabolism; tricarboxylic acid cycle; succinate from succinyl-CoA (ligase route): step 1/1. Its function is as follows. Succinyl-CoA synthetase functions in the citric acid cycle (TCA), coupling the hydrolysis of succinyl-CoA to the synthesis of either ATP or GTP and thus represents the only step of substrate-level phosphorylation in the TCA. The beta subunit provides nucleotide specificity of the enzyme and binds the substrate succinate, while the binding sites for coenzyme A and phosphate are found in the alpha subunit. The chain is Succinate--CoA ligase [ADP-forming] subunit beta from Bradyrhizobium sp. (strain ORS 278).